Reading from the N-terminus, the 347-residue chain is N-acetyl-gamma-glutamyl-phosphate reductase (347 aa).

Residue Cys155 is part of the active site.

This sequence belongs to the NAGSA dehydrogenase family. Type 1 subfamily.

The protein localises to the cytoplasm. It carries out the reaction N-acetyl-L-glutamate 5-semialdehyde + phosphate + NADP(+) = N-acetyl-L-glutamyl 5-phosphate + NADPH + H(+). It participates in amino-acid biosynthesis; L-arginine biosynthesis; N(2)-acetyl-L-ornithine from L-glutamate: step 3/4. In terms of biological role, catalyzes the NADPH-dependent reduction of N-acetyl-5-glutamyl phosphate to yield N-acetyl-L-glutamate 5-semialdehyde. This is N-acetyl-gamma-glutamyl-phosphate reductase from Akkermansia muciniphila (strain ATCC BAA-835 / DSM 22959 / JCM 33894 / BCRC 81048 / CCUG 64013 / CIP 107961 / Muc).